A 392-amino-acid chain; its full sequence is Leucine aminopeptidase 1 (392 aa).

An N-terminal signal peptide occupies residues 1–18; that stretch reads MKFSQASLLAACLPAISA. Residues 19-82 constitute a propeptide that is removed on maturation; the sequence is RFIETAEADN…LGSTRLNAQT (64 aa). Asn-174 carries N-linked (GlcNAc...) asparagine glycosylation. Residues His-182, Asp-201, Glu-240, and Asp-267 each contribute to the Zn(2+) site. The cysteines at positions 316 and 320 are disulfide-linked. His-349 lines the Zn(2+) pocket.

It belongs to the peptidase M28 family. M28E subfamily. As to quaternary structure, monomer. Zn(2+) serves as cofactor.

The protein localises to the secreted. Extracellular aminopeptidase that allows assimilation of proteinaceous substrates. In Fusarium vanettenii (strain ATCC MYA-4622 / CBS 123669 / FGSC 9596 / NRRL 45880 / 77-13-4) (Fusarium solani subsp. pisi), this protein is Leucine aminopeptidase 1 (LAP1).